Reading from the N-terminus, the 499-residue chain is Potassium voltage-gated channel subfamily A member 2 (499 aa).

The segment at 1-26 is disordered; that stretch reads MTVATGDPADEAAALPGHPQDTYDPE. The tract at residues 1–125 is tetramerization domain; the sequence is MTVATGDPAD…YELGEEAMEM (125 aa). Topologically, residues 1-160 are cytoplasmic; that stretch reads MTVATGDPAD…LLFEYPESSG (160 aa). The chain crosses the membrane as a helical span at residues 161 to 182; the sequence is PARIIAIVSVMVILISIVSFCL. The Extracellular segment spans residues 183–221; it reads ETLPIFRDENEDMHGSGVTFHTYSNSTIGYQQSTSFTDP. Residue Asn207 is glycosylated (N-linked (GlcNAc...) asparagine). The helical transmembrane segment at 222–243 threads the bilayer; sequence FFIVETLCIIWFSFEFLVRFFA. Cys244 carries S-palmitoyl cysteine lipidation. The Cytoplasmic segment spans residues 244–254; the sequence is CPSKAGFFTNI. The helical transmembrane segment at 255-275 threads the bilayer; sequence MNIIDIVAIIPYFITLGTELA. Topologically, residues 276–289 are extracellular; the sequence is EKPEDAQQGQQAMS. Residues 290–310 form a helical; Voltage-sensor membrane-spanning segment; that stretch reads LAILRVIRLVRVFRIFKLSRH. Over 311–325 the chain is Cytoplasmic; sequence SKGLQILGQTLKASM. Residues 312 to 325 are S4-S5 linker; that stretch reads KGLQILGQTLKASM. Residues 326 to 347 form a helical membrane-spanning segment; that stretch reads RELGLLIFFLFIGVILFSSAVY. Topologically, residues 348 to 361 are extracellular; that stretch reads FAEADERESQFPSI. The helical intramembrane region spans 362 to 373; the sequence is PDAFWWAVVSMT. A Selectivity filter motif is present at residues 374-379; that stretch reads TVGYGD. The stretch at 374 to 381 is an intramembrane region; the sequence is TVGYGDMV. Topologically, residues 382 to 388 are extracellular; it reads PTTIGGK. Residues 389–417 traverse the membrane as a helical segment; sequence IVGSLCAIAGVLTIALPVPVIVSNFNYFY. The Cytoplasmic portion of the chain corresponds to 418–499; that stretch reads HRETEGEEQA…VNITKMLTDV (82 aa). Tyr429 carries the phosphotyrosine modification. 4 positions are modified to phosphoserine: Ser434, Ser440, Ser441, and Ser449. Residue Tyr458 is modified to Phosphotyrosine. Residue Ser468 is modified to Phosphoserine. Positions 497 to 499 match the PDZ-binding motif; the sequence is TDV.

It belongs to the potassium channel family. A (Shaker) (TC 1.A.1.2) subfamily. Kv1.2/KCNA2 sub-subfamily. Homotetramer and heterotetramer with other channel-forming alpha subunits, such as KCNA1, KCNA4, KCNA5, KCNA6 and KCNA7. Channel activity is regulated by interaction with the beta subunits, including KCNAB1 and KCNAB2. Identified in a complex with KCNA1 and KCNAB2. Identified in a complex with KCNA5 and KCNAB1. Identified in a complex with KCNA4 and FYN. Interacts with the beta subunit KCNAB1. Interacts with PTK2B. Interacts (via C-terminus) with CTTN. Interacts (via N-terminal cytoplasmic domain) with RHOA (GTP-bound form); this regulates channel activity by reducing location at the cell surface in response to CHRM1 activation. Interacts with DRD2. Interacts with SIGMAR1; cocaine consumption leads to increased interaction. Interacts with ADAM22. Interacts (via C-terminus) with the PDZ domains of DLG1, DLG2 and DLG4. Interacts with CNTNAP2. Interacts with ADAM11. Interacts with LYNX1. Phosphorylated on tyrosine residues; phosphorylation increases in response to ischemia. Phosphorylated on tyrosine residues by activated PTK2B/PYK2. Phosphorylation on tyrosine residues suppresses ion channel activity. Phosphorylated on tyrosine residues in response to CHRM1 activation; this abolishes interaction with CTTN. This is probably due to endocytosis of the phosphorylated channel subunits. Phosphorylated on serine residues in response to increased cAMP levels; phosphorylation is apparently not catalyzed by PKA. Post-translationally, N-glycosylated, with complex, sialylated N-glycans. In terms of tissue distribution, detected in brain cortex. Detected in peroneal nerve in the juxtaparanodal regions of the node of Ranvier; expression is decreased in patients with diabetes mellitus that suffer from axonal neuropathy. Detected in paranodal and juxtanodal zones in myelinated spinal cord (at protein level).

Its subcellular location is the cell membrane. It localises to the membrane. The protein resides in the cell projection. The protein localises to the axon. It is found in the synapse. Its subcellular location is the endoplasmic reticulum membrane. It localises to the lamellipodium membrane. The protein resides in the synaptosome. The protein localises to the presynaptic cell membrane. It is found in the dendrite. Its subcellular location is the cell junction. It localises to the paranodal septate junction. It carries out the reaction K(+)(in) = K(+)(out). Its activity is regulated as follows. Inhibited by 4-aminopyridine (4-AP) and charybdotoxin (CTX), but not by tetraethylammonium (TEA). Inhibited by dendrotoxin (DTX). Inhibited by tityustoxin-K alpha (TsTX-Kalpha), a toxin that is highly specific for KCNA2. Inhibited by maurotoxin. Inhibited by kappaM conotoxins kappaM-RIIIJ and kappaM-RIIIK; kappaM-RIIIJ has much higher affinity for channels containing KCNA2 than kappaM-RIIIK, with the exception of heterodimers formed by KCNA2 and KCNA7 where the opposite is true. Functionally, voltage-gated potassium channel that mediates transmembrane potassium transport in excitable membranes, primarily in the brain and the central nervous system, but also in the cardiovascular system. Prevents aberrant action potential firing and regulates neuronal output. Forms tetrameric potassium-selective channels through which potassium ions pass in accordance with their electrochemical gradient. The channel alternates between opened and closed conformations in response to the voltage difference across the membrane. Can form functional homotetrameric channels and heterotetrameric channels that contain variable proportions of KCNA1, KCNA2, KCNA4, KCNA5, KCNA6, KCNA7, and possibly other family members as well; channel properties depend on the type of alpha subunits that are part of the channel. Channel properties are modulated by cytoplasmic beta subunits that regulate the subcellular location of the alpha subunits and promote rapid inactivation of delayed rectifier potassium channels. In vivo, membranes probably contain a mixture of heteromeric potassium channel complexes, making it difficult to assign currents observed in intact tissues to any particular potassium channel family member. Homotetrameric KCNA2 forms a delayed-rectifier potassium channel that opens in response to membrane depolarization, followed by slow spontaneous channel closure. In contrast, a heteromultimer formed by KCNA2 and KCNA4 shows rapid inactivation. Regulates neuronal excitability and plays a role as pacemaker in the regulation of neuronal action potentials. KCNA2-containing channels play a presynaptic role and prevent hyperexcitability and aberrant action potential firing. Response to toxins that are selective for KCNA2-containing potassium channels suggests that in Purkinje cells, dendritic subthreshold KCNA2-containing potassium channels prevent random spontaneous calcium spikes, suppressing dendritic hyperexcitability without hindering the generation of somatic action potentials, and thereby play an important role in motor coordination. Plays a role in the induction of long-term potentiation of neuron excitability in the CA3 layer of the hippocampus. May function as down-stream effector for G protein-coupled receptors and inhibit GABAergic inputs to basolateral amygdala neurons. May contribute to the regulation of neurotransmitter release, such as gamma-aminobutyric acid (GABA). Contributes to the regulation of the axonal release of the neurotransmitter dopamine. Reduced KCNA2 expression plays a role in the perception of neuropathic pain after peripheral nerve injury, but not acute pain. Plays a role in the regulation of the time spent in non-rapid eye movement (NREM) sleep. The polypeptide is Potassium voltage-gated channel subfamily A member 2 (KCNA2) (Homo sapiens (Human)).